We begin with the raw amino-acid sequence, 354 residues long: Protein Wnt-9a (354 aa).

Residues 1–15 (MALLRALLGLLACTP) form the signal peptide. Intrachain disulfides connect cysteine 85/cysteine 96, cysteine 133/cysteine 141, cysteine 143/cysteine 160, cysteine 207/cysteine 221, and cysteine 209/cysteine 216. An N-linked (GlcNAc...) asparagine glycan is attached at asparagine 95. Serine 213 carries O-palmitoleoyl serine; by PORCN lipidation. Positions 246 to 271 (GSTTNEATGEGDISPPKKSIPGHSDQ) are disordered. 6 cysteine pairs are disulfide-bonded: cysteine 288/cysteine 313, cysteine 302/cysteine 308, cysteine 312/cysteine 352, cysteine 328/cysteine 343, cysteine 330/cysteine 340, and cysteine 335/cysteine 336.

This sequence belongs to the Wnt family. In terms of processing, palmitoleoylation is required for efficient binding to frizzled receptors. Depalmitoleoylation leads to Wnt signaling pathway inhibition.

The protein resides in the secreted. It localises to the extracellular space. Its subcellular location is the extracellular matrix. Its function is as follows. Ligand for members of the frizzled family of seven transmembrane receptors. Functions in the canonical Wnt/beta-catenin signaling pathway. Plays a role in embryonic chondrocyte maturation and in embryonic bone mineralization. This Gallus gallus (Chicken) protein is Protein Wnt-9a (WNT9A).